Here is a 109-residue protein sequence, read N- to C-terminus: UPF0060 membrane protein RC1_3291 (109 aa).

The next 4 helical transmembrane spans lie at 4 to 24, 31 to 51, 59 to 79, and 88 to 108; these read IATYLLAAVAEIGGCFAFWAW, PLWLIPGMASLALFAWALTRI, AYAAYGGIYILTSLVWMWLVE, and TLGTVLCVSGALVIIFGPRGG.

It belongs to the UPF0060 family.

The protein resides in the cell inner membrane. This chain is UPF0060 membrane protein RC1_3291, found in Rhodospirillum centenum (strain ATCC 51521 / SW).